Reading from the N-terminus, the 661-residue chain is Putative K(+) efflux antiporter KefB (661 aa).

11 helical membrane passes run 5–25, 31–51, 53–73, 100–120, 154–174, 178–198, 224–244, 273–293, 296–316, 330–350, and 360–380; these read GTLI…MLFQ, ASIA…GPVI, EGYI…TIGL, LLVA…FVIG, VFQD…GVAM, IAST…LVVL, VLLV…SMAF, LLGI…LPEI, IALA…TALV, GLIL…ALEG, and IILT…RYNL. Residues 410–527 enclose the RCK N-terminal domain; it reads QQHVVIAGFG…RQAGATEVIP (118 aa). In terms of domain architecture, RCK C-terminal spans 571–656; the sequence is RGSADLLKTQ…LEQASLVLTH (86 aa).

Belongs to the monovalent cation:proton antiporter 2 (CPA2) transporter (TC 2.A.37) family. KEA (TC 2.A.37.1) subfamily.

Its subcellular location is the cell membrane. Functionally, may operate as a K(+)/H(+) antiporter. The polypeptide is Putative K(+) efflux antiporter KefB (kefB) (Alkalimonas amylolytica).